A 1041-amino-acid polypeptide reads, in one-letter code: Toll-like receptor 8 (1041 aa).

An N-terminal signal peptide occupies residues 1 to 26; sequence MENMFLQSSMLTCIFLLISGSCELCA. The Extracellular portion of the chain corresponds to 27 to 827; sequence EENFSRSYPC…ELTTCVSDVT (801 aa). 5 N-linked (GlcNAc...) asparagine glycosylation sites follow: N29, N42, N80, N88, and N115. The cysteines at positions 36 and 49 are disulfide-linked. LRR repeat units follow at residues 126-147, 148-168, 171-193, 202-223, 224-244, and 247-268; these read NLRE…LPES, LTEL…GISR, NLKN…TNIE, NLEL…LPSS, LRKL…DFKG, and NLTL…FPCV. A glycan (N-linked (GlcNAc...) asparagine) is linked at N160. Residues C181 and C187 are joined by a disulfide bond. N247 is a glycosylation site (N-linked (GlcNAc...) asparagine). 2 disulfide bridges follow: C257–C270 and C260–C267. 2 N-linked (GlcNAc...) asparagine glycosylation sites follow: N285 and N293. LRR repeat units lie at residues 288-309, 312-334, and 338-360; these read QLRY…WFKN, HLKV…AFLT, and RLEI…INIS. 2 N-linked (GlcNAc...) asparagine glycosylation sites follow: N358 and N362. LRR repeat units lie at residues 368–389, 395–416, and 419–440; these read SLRA…DFQP, NLST…LFQN, and NLEI…TRQS. Residues N395 and N416 are each glycosylated (N-linked (GlcNAc...) asparagine). N-linked (GlcNAc...) asparagine glycosylation occurs at N443. An intrachain disulfide couples C479 to C509. 4 LRR repeats span residues 482–503, 506–527, 531–551, and 555–577; these read YGKA…QFEN, DIAC…TEFS, HVKY…SALT, and DLEV…THHL. N-linked (GlcNAc...) asparagine glycans are attached at residues N511 and N546. N-linked (GlcNAc...) asparagine glycans are attached at residues N582 and N590. LRR repeat units follow at residues 585-606, 609-630, 640-661, 665-685, 689-710, 713-734, and 737-758; these read NLKV…YNLE, SLVE…DDNR, NLTR…AFLN, SLTE…TLLQ, RLEL…LSDF, SLRT…FLSE, and SLKH…ALET. Residues N640 and N680 are each glycosylated (N-linked (GlcNAc...) asparagine). N752 carries an N-linked (GlcNAc...) asparagine glycan. The LRRCT domain occupies 772 to 824; that stretch reads NPFECTCDIGDFRRWMDEHLNVKIPRLVDVICASPGDQRGKSIVSLELTTCVS. An intrachain disulfide couples C776 to C803. Residues 828-848 traverse the membrane as a helical segment; the sequence is AVILFFFTFFITTMVMLAALA. The Cytoplasmic segment spans residues 849–1041; it reads HHLFYWDVWF…NMYVDSIKQY (193 aa). A TIR domain is found at 878-1022; that stretch reads TFYDAYISYD…LFWQTLRNVV (145 aa).

This sequence belongs to the Toll-like receptor family. As to quaternary structure, homodimer. Interacts with MYD88 via their respective TIR domains. Interacts with UNC93B1. Interacts with BTK. Interacts with SMPDL3B. In terms of processing, ubiquitinated by RNF216; leading to degradation by the proteasome. Post-translationally, proteolytic processing occurs in monocytes and monocyte-derived macrophages by both furin-like proprotein convertase and cathepsins. The cleavage is necessary for dimer formation and subsequent activation. In terms of tissue distribution, expressed in myeloid dendritic cells, monocytes, and monocyte-derived dendritic cells.

The protein localises to the endosome membrane. Activated by RNAs having enough uridines. Functionally, endosomal receptor that plays a key role in innate and adaptive immunity. Controls host immune response against pathogens through recognition of RNA degradation products specific to microorganisms that are initially processed by RNASET2. Recognizes GU-rich single-stranded RNA (GU-rich RNA) derived from SARS-CoV-2, SARS-CoV-1 and HIV-1 viruses. Upon binding to agonists, undergoes dimerization that brings TIR domains from the two molecules into direct contact, leading to the recruitment of TIR-containing downstream adapter MYD88 through homotypic interaction. In turn, the Myddosome signaling complex is formed involving IRAK4, IRAK1, TRAF6, TRAF3 leading to activation of downstream transcription factors NF-kappa-B and IRF7 to induce pro-inflammatory cytokines and interferons, respectively. This is Toll-like receptor 8 from Homo sapiens (Human).